The chain runs to 337 residues: uncharacterized protein (337 aa).

This sequence belongs to the NAD(P)-dependent epimerase/dehydratase family.

This is an uncharacterized protein from Escherichia coli (strain K12).